The sequence spans 47 residues: MQVYCNVLCRCGRGADVLRDRVGPRTKRANQASPPVGRHSSRLMCPG.

Positions 22 to 47 (VGPRTKRANQASPPVGRHSSRLMCPG) are disordered.

This is an uncharacterized protein from Saccharomyces cerevisiae (strain ATCC 204508 / S288c) (Baker's yeast).